A 66-amino-acid polypeptide reads, in one-letter code: Large ribosomal subunit protein bL31 (66 aa).

4 residues coordinate Zn(2+): Cys-16, Cys-18, Cys-36, and Cys-39.

Belongs to the bacterial ribosomal protein bL31 family. Type A subfamily. As to quaternary structure, part of the 50S ribosomal subunit. Zn(2+) is required as a cofactor.

Functionally, binds the 23S rRNA. This is Large ribosomal subunit protein bL31 from Pelobacter propionicus (strain DSM 2379 / NBRC 103807 / OttBd1).